The sequence spans 201 residues: Recombination protein RecR (201 aa).

The C4-type zinc finger occupies 57–72 (CADCRTFTEQEVCNIC). The region spanning 81–176 (GQICVVESPA…DASRIAHGVP (96 aa)) is the Toprim domain.

It belongs to the RecR family.

In terms of biological role, may play a role in DNA repair. It seems to be involved in an RecBC-independent recombinational process of DNA repair. It may act with RecF and RecO. The protein is Recombination protein RecR of Klebsiella pneumoniae subsp. pneumoniae (strain ATCC 700721 / MGH 78578).